The chain runs to 100 residues: Urease subunit gamma (100 aa).

Belongs to the urease gamma subunit family. In terms of assembly, heterotrimer of UreA (gamma), UreB (beta) and UreC (alpha) subunits. Three heterotrimers associate to form the active enzyme.

It localises to the cytoplasm. The enzyme catalyses urea + 2 H2O + H(+) = hydrogencarbonate + 2 NH4(+). It functions in the pathway nitrogen metabolism; urea degradation; CO(2) and NH(3) from urea (urease route): step 1/1. In Paraburkholderia phytofirmans (strain DSM 17436 / LMG 22146 / PsJN) (Burkholderia phytofirmans), this protein is Urease subunit gamma.